Reading from the N-terminus, the 144-residue chain is Large ribosomal subunit protein uL15 (144 aa).

Positions 1–52 (MKLHTLKSTPGARVEKHRVGRGHAAGKGKQAGKGQSGQNKRHGHRLGFEGGQ) are disordered. A compositionally biased stretch (basic residues) spans 15–26 (EKHRVGRGHAAG).

The protein belongs to the universal ribosomal protein uL15 family. In terms of assembly, part of the 50S ribosomal subunit.

Functionally, binds to the 23S rRNA. This is Large ribosomal subunit protein uL15 from Mycoplasmopsis agalactiae (strain NCTC 10123 / CIP 59.7 / PG2) (Mycoplasma agalactiae).